Here is a 116-residue protein sequence, read N- to C-terminus: Large ribosomal subunit protein bL19 (116 aa).

This sequence belongs to the bacterial ribosomal protein bL19 family.

Its function is as follows. This protein is located at the 30S-50S ribosomal subunit interface and may play a role in the structure and function of the aminoacyl-tRNA binding site. This chain is Large ribosomal subunit protein bL19, found in Staphylococcus aureus (strain Mu3 / ATCC 700698).